Here is a 157-residue protein sequence, read N- to C-terminus: 2-C-methyl-D-erythritol 2,4-cyclodiphosphate synthase (157 aa).

Positions 8 and 10 each coordinate a divalent metal cation. 4-CDP-2-C-methyl-D-erythritol 2-phosphate is bound by residues aspartate 8–histidine 10 and histidine 34–serine 35. A divalent metal cation is bound at residue histidine 42. 4-CDP-2-C-methyl-D-erythritol 2-phosphate contacts are provided by residues aspartate 56 to glycine 58, threonine 132 to glutamate 135, phenylalanine 139, and arginine 142.

It belongs to the IspF family. In terms of assembly, homotrimer. It depends on a divalent metal cation as a cofactor.

It carries out the reaction 4-CDP-2-C-methyl-D-erythritol 2-phosphate = 2-C-methyl-D-erythritol 2,4-cyclic diphosphate + CMP. Its pathway is isoprenoid biosynthesis; isopentenyl diphosphate biosynthesis via DXP pathway; isopentenyl diphosphate from 1-deoxy-D-xylulose 5-phosphate: step 4/6. Its function is as follows. Involved in the biosynthesis of isopentenyl diphosphate (IPP) and dimethylallyl diphosphate (DMAPP), two major building blocks of isoprenoid compounds. Catalyzes the conversion of 4-diphosphocytidyl-2-C-methyl-D-erythritol 2-phosphate (CDP-ME2P) to 2-C-methyl-D-erythritol 2,4-cyclodiphosphate (ME-CPP) with a corresponding release of cytidine 5-monophosphate (CMP). The chain is 2-C-methyl-D-erythritol 2,4-cyclodiphosphate synthase from Symbiobacterium thermophilum (strain DSM 24528 / JCM 14929 / IAM 14863 / T).